Reading from the N-terminus, the 170-residue chain is Phosphopantetheine adenylyltransferase (170 aa).

Thr9 is a substrate binding site. ATP-binding positions include 9–10 (TF) and His17. 3 residues coordinate substrate: Lys41, Leu73, and Arg87. ATP contacts are provided by residues 88 to 90 (GLR), Glu98, and 123 to 129 (YQFISGT).

It belongs to the bacterial CoaD family. As to quaternary structure, homohexamer. The cofactor is Mg(2+).

It localises to the cytoplasm. The catalysed reaction is (R)-4'-phosphopantetheine + ATP + H(+) = 3'-dephospho-CoA + diphosphate. It functions in the pathway cofactor biosynthesis; coenzyme A biosynthesis; CoA from (R)-pantothenate: step 4/5. Reversibly transfers an adenylyl group from ATP to 4'-phosphopantetheine, yielding dephospho-CoA (dPCoA) and pyrophosphate. In Bordetella petrii (strain ATCC BAA-461 / DSM 12804 / CCUG 43448), this protein is Phosphopantetheine adenylyltransferase.